We begin with the raw amino-acid sequence, 297 residues long: Ribosomal RNA small subunit methyltransferase H (297 aa).

S-adenosyl-L-methionine contacts are provided by residues 37–39, glutamate 56, phenylalanine 87, aspartate 102, and histidine 109; that span reads GGH.

The protein belongs to the methyltransferase superfamily. RsmH family.

It is found in the cytoplasm. It carries out the reaction cytidine(1402) in 16S rRNA + S-adenosyl-L-methionine = N(4)-methylcytidine(1402) in 16S rRNA + S-adenosyl-L-homocysteine + H(+). Its function is as follows. Specifically methylates the N4 position of cytidine in position 1402 (C1402) of 16S rRNA. The sequence is that of Ribosomal RNA small subunit methyltransferase H from Borrelia duttonii (strain Ly).